We begin with the raw amino-acid sequence, 345 residues long: Dihydroorotate dehydrogenase (quinone) (345 aa).

FMN is bound by residues 65 to 69 and Thr89; that span reads AGLDK. Lys69 lines the substrate pocket. 114–118 provides a ligand contact to substrate; the sequence is NRMGF. The FMN site is built by Asn142 and Asn175. Asn175 lines the substrate pocket. Ser178 (nucleophile) is an active-site residue. Residue Asn180 coordinates substrate. Residues Lys220 and Thr248 each coordinate FMN. A substrate-binding site is contributed by 249–250; the sequence is NT. FMN is bound by residues Gly271, Gly300, and 321–322; that span reads YT.

Belongs to the dihydroorotate dehydrogenase family. Type 2 subfamily. As to quaternary structure, monomer. The cofactor is FMN.

The protein resides in the cell membrane. The catalysed reaction is (S)-dihydroorotate + a quinone = orotate + a quinol. Its pathway is pyrimidine metabolism; UMP biosynthesis via de novo pathway; orotate from (S)-dihydroorotate (quinone route): step 1/1. Catalyzes the conversion of dihydroorotate to orotate with quinone as electron acceptor. The polypeptide is Dihydroorotate dehydrogenase (quinone) (Burkholderia multivorans (strain ATCC 17616 / 249)).